Here is a 41-residue protein sequence, read N- to C-terminus: MTKITIPTALSAKVHGEGQHLFEPMAARCTCTTIISSSSTF.

A propeptide spanning residues 1-27 is cleaved from the precursor; the sequence is MTKITIPTALSAKVHGEGQHLFEPMAA. R28 bears the N2,N2-dimethylarginine; in form plantazolicin A mark. The segment at residues 28–29 is a cross-link (thiazole-4-carboxylic acid (Arg-Cys)); it reads RC. 2 cross-links (5-methyloxazole-4-carboxylic acid (Cys-Thr)) span residues 29–30 and 31–32; these read CT. A cross-link (thiazole-4-carboxylic acid (Thr-Cys)) is located at residues 30 to 31; sequence TC. Positions 32 to 33 form a cross-link, 5-methyloxazole-4-carboxylic acid (Thr-Thr); the sequence is TT. The oxazole-4-carboxylic acid (Ile-Ser) cross-link spans 35–36; sequence IS. Cross-links (oxazole-4-carboxylic acid (Ser-Ser)) lie at residues 36 to 37, 37 to 38, and 38 to 39; these read SS. The 5-methyloxazoline-4-carboxylic acid (Ser-Thr) cross-link spans 39 to 40; it reads ST.

In terms of processing, maturation of thiazole and oxazole containing antibiotics involves the enzymatic condensation of a Cys, Ser or Thr with the alpha-carbonyl of the preceding amino acid to form a thioether or ether bond, then dehydration to form a double bond with the alpha-amino nitrogen. Thiazoline or oxazoline ring are dehydrogenated to form thiazole or oxazole rings.

The protein localises to the secreted. Its subcellular location is the cell wall. Its function is as follows. Peptide antibiotic inhibiting growth of Gram-positive bacteria. The mode of action appears to be disruption of cell walls and lysis of cells. The sequence is that of Plantazolicin from Bacillus pumilus (strain ATCC 7061 / DSM 27 / CCUG 26015 / JCM 2508 / NBRC 12092 / NCIMB 9369 / NCTC 10337 / NRRL NRS-272 / CCM 2144).